Consider the following 309-residue polypeptide: Homoserine O-succinyltransferase (309 aa).

C142 acts as the Acyl-thioester intermediate in catalysis. Positions 163 and 192 each coordinate substrate. H235 (proton acceptor) is an active-site residue. E237 is an active-site residue. Residue R249 coordinates substrate.

The protein belongs to the MetA family. In terms of assembly, homodimer.

The protein resides in the cytoplasm. The enzyme catalyses L-homoserine + succinyl-CoA = O-succinyl-L-homoserine + CoA. The protein operates within amino-acid biosynthesis; L-methionine biosynthesis via de novo pathway; O-succinyl-L-homoserine from L-homoserine: step 1/1. Its function is as follows. Transfers a succinyl group from succinyl-CoA to L-homoserine, forming succinyl-L-homoserine. This chain is Homoserine O-succinyltransferase, found in Escherichia coli (strain ATCC 8739 / DSM 1576 / NBRC 3972 / NCIMB 8545 / WDCM 00012 / Crooks).